Consider the following 219-residue polypeptide: Ras-related protein Rab-3B (219 aa).

A2 carries the post-translational modification N-acetylalanine. GTP contacts are provided by S31, S32, V33, G34, K35, T36, S37, P49, and S53. T36 provides a ligand contact to Mg(2+). Residues 45-58 (DTFTPAFVSTVGID) carry the Switch 1 motif. The Mg(2+) site is built by T54 and D77. A Switch 2 motif is present at residues 78-96 (TAGQERYRTITTAYYRGAM). G80 lines the GTP pocket. The residue at position 86 (T86) is a Phosphothreonine. GTP is bound by residues N135, K136, D138, A166, and K167. 2 positions are modified to phosphoserine: S188 and S190. 2 S-geranylgeranyl cysteine lipidation sites follow: C217 and C219. Cysteine methyl ester is present on C219.

The protein belongs to the small GTPase superfamily. Rab family. Interacts with RIMS1, RIMS2, RPH3A and RPH3AL. The GTP-bound form interacts with GAS8/DRC4 (via coiled-coil domains). Interacts with GDI2, CHM and CHML; phosphorylation at Thr-86 disrupts these interactions. Interacts with MADD (via uDENN domain); the GTP-bound form is preferred for interaction. It depends on Mg(2+) as a cofactor. Post-translationally, phosphorylation of Thr-86 in the switch II region by LRRK2 prevents the association of RAB regulatory proteins, including CHM, CHML and RAB GDP dissociation inhibitor GDI2.

The protein localises to the cell membrane. It localises to the golgi apparatus. The catalysed reaction is GTP + H2O = GDP + phosphate + H(+). Regulated by guanine nucleotide exchange factors (GEFs) which promote the exchange of bound GDP for free GTP. Regulated by GTPase activating proteins (GAPs) which increase the GTP hydrolysis activity. Inhibited by GDP dissociation inhibitors (GDIs) which prevent Rab-GDP dissociation. Its function is as follows. The small GTPases Rab are key regulators of intracellular membrane trafficking, from the formation of transport vesicles to their fusion with membranes. Rabs cycle between an inactive GDP-bound form and an active GTP-bound form that is able to recruit to membranes different sets of downstream effectors directly responsible for vesicle formation, movement, tethering and fusion. The polypeptide is Ras-related protein Rab-3B (RAB3B) (Mesocricetus auratus (Golden hamster)).